Reading from the N-terminus, the 54-residue chain is Large ribosomal subunit protein bL33 (54 aa).

The protein belongs to the bacterial ribosomal protein bL33 family.

This Herpetosiphon aurantiacus (strain ATCC 23779 / DSM 785 / 114-95) protein is Large ribosomal subunit protein bL33.